Here is a 174-residue protein sequence, read N- to C-terminus: Adenylate kinase (174 aa).

The segment at 12–41 (STGDMLRAAIKAGTPLGLEAKKIIDEGGLV) is NMP. Residues Thr-13, Arg-18, 39-41 (GLV), 67-70 (GFPR), and Gln-74 contribute to the AMP site. The LID stretch occupies residues 104 to 141 (GRRVHLASGRTYHVTYNPPKVEGKDDVTGEDLIQRDDD). Residues Arg-105 and 114–115 (TY) each bind ATP. 2 residues coordinate AMP: Arg-138 and Arg-149.

The protein belongs to the adenylate kinase family. As to quaternary structure, monomer.

Its subcellular location is the cytoplasm. The enzyme catalyses AMP + ATP = 2 ADP. Its pathway is purine metabolism; AMP biosynthesis via salvage pathway; AMP from ADP: step 1/1. Its function is as follows. Catalyzes the reversible transfer of the terminal phosphate group between ATP and AMP. Plays an important role in cellular energy homeostasis and in adenine nucleotide metabolism. The protein is Adenylate kinase of Neisseria lactamica.